The chain runs to 203 residues: Glycerol-3-phosphate acyltransferase (203 aa).

The next 4 membrane-spanning stretches (helical) occupy residues 6–26 (LTLL…AVLV), 82–102 (AISL…PVFF), 118–138 (APIG…LVLI), and 141–161 (YSSL…WWLD).

This sequence belongs to the PlsY family. In terms of assembly, probably interacts with PlsX.

It localises to the cell inner membrane. The enzyme catalyses an acyl phosphate + sn-glycerol 3-phosphate = a 1-acyl-sn-glycero-3-phosphate + phosphate. Its pathway is lipid metabolism; phospholipid metabolism. In terms of biological role, catalyzes the transfer of an acyl group from acyl-phosphate (acyl-PO(4)) to glycerol-3-phosphate (G3P) to form lysophosphatidic acid (LPA). This enzyme utilizes acyl-phosphate as fatty acyl donor, but not acyl-CoA or acyl-ACP. This is Glycerol-3-phosphate acyltransferase from Shewanella oneidensis (strain ATCC 700550 / JCM 31522 / CIP 106686 / LMG 19005 / NCIMB 14063 / MR-1).